Here is a 463-residue protein sequence, read N- to C-terminus: Siroheme synthase (463 aa).

The segment at 1–203 (MDYLPLFHKL…GQGAEAERLL (203 aa)) is precorrin-2 dehydrogenase /sirohydrochlorin ferrochelatase. NAD(+) is bound by residues 22–23 (EI) and 43–44 (PD). A Phosphoserine modification is found at Ser-128. The tract at residues 216-463 (GEVYLVGAGP…LAWFEGSQNS (248 aa)) is uroporphyrinogen-III C-methyltransferase. Pro-225 contributes to the S-adenosyl-L-methionine binding site. The active-site Proton acceptor is the Asp-248. Lys-270 (proton donor) is an active-site residue. Residues 301 to 303 (GGD), Ile-306, 331 to 332 (TA), Met-383, and Gly-412 contribute to the S-adenosyl-L-methionine site.

The protein in the N-terminal section; belongs to the precorrin-2 dehydrogenase / sirohydrochlorin ferrochelatase family. This sequence in the C-terminal section; belongs to the precorrin methyltransferase family.

The catalysed reaction is uroporphyrinogen III + 2 S-adenosyl-L-methionine = precorrin-2 + 2 S-adenosyl-L-homocysteine + H(+). The enzyme catalyses precorrin-2 + NAD(+) = sirohydrochlorin + NADH + 2 H(+). It catalyses the reaction siroheme + 2 H(+) = sirohydrochlorin + Fe(2+). It functions in the pathway cofactor biosynthesis; adenosylcobalamin biosynthesis; precorrin-2 from uroporphyrinogen III: step 1/1. The protein operates within cofactor biosynthesis; adenosylcobalamin biosynthesis; sirohydrochlorin from precorrin-2: step 1/1. Its pathway is porphyrin-containing compound metabolism; siroheme biosynthesis; precorrin-2 from uroporphyrinogen III: step 1/1. It participates in porphyrin-containing compound metabolism; siroheme biosynthesis; siroheme from sirohydrochlorin: step 1/1. It functions in the pathway porphyrin-containing compound metabolism; siroheme biosynthesis; sirohydrochlorin from precorrin-2: step 1/1. In terms of biological role, multifunctional enzyme that catalyzes the SAM-dependent methylations of uroporphyrinogen III at position C-2 and C-7 to form precorrin-2 via precorrin-1. Then it catalyzes the NAD-dependent ring dehydrogenation of precorrin-2 to yield sirohydrochlorin. Finally, it catalyzes the ferrochelation of sirohydrochlorin to yield siroheme. The polypeptide is Siroheme synthase (Pseudomonas putida (strain ATCC 700007 / DSM 6899 / JCM 31910 / BCRC 17059 / LMG 24140 / F1)).